The sequence spans 444 residues: MLDGLRDAVRKFLGSSDYEKAVNEFIKELQIILIKADVNVRLVKDLTDRIKKRITEEKPPSAIEKREWFISIVYDELSRLFGGDKEPEVMPKKLPYIIMLVGVQGSGKTTTSGKLALFYKKKGYKVGLVAADIYRPAAYEQLIQIGQQINIPVYGEPGNKNPIEIATNGLEKFLKEKMNIVIIDTAGRHGYGEEASLLEEMKSMYDKIHPDEVILVIDASIGQKAYDLASRFHQASPIGSLIVSKMDGTAKGGGALSAVIATGAQIKFIGTGEKLDELEVFNPRRFVSRLLGLGDIESIIEKIKSVEDYENLEKRMEDVISGKTKLTLRDIYKQLIALRKMGPLGKIFQMLPGAGILSQVPEEQLKLGEEKIRTFMAIMNSMTYKELDNPSIIDKARMRRIAKGAGVTVEEVKELLKQYQMTNNLLKMVKRRKGLAKLFGGSNQ.

Residues 102 to 109 (GVQGSGKT), 184 to 188 (DTAGR), and 244 to 247 (SKMD) contribute to the GTP site.

Belongs to the GTP-binding SRP family. SRP54 subfamily. In terms of assembly, part of the signal recognition particle protein translocation system, which is composed of SRP and FtsY. Archaeal SRP consists of a 7S RNA molecule of 300 nucleotides and two protein subunits: SRP54 and SRP19.

It localises to the cytoplasm. It catalyses the reaction GTP + H2O = GDP + phosphate + H(+). Its function is as follows. Involved in targeting and insertion of nascent membrane proteins into the cytoplasmic membrane. Binds to the hydrophobic signal sequence of the ribosome-nascent chain (RNC) as it emerges from the ribosomes. The SRP-RNC complex is then targeted to the cytoplasmic membrane where it interacts with the SRP receptor FtsY. The protein is Signal recognition particle 54 kDa protein of Sulfolobus acidocaldarius (strain ATCC 33909 / DSM 639 / JCM 8929 / NBRC 15157 / NCIMB 11770).